Consider the following 671-residue polypeptide: DNA ligase (671 aa).

NAD(+) is bound by residues 36–40 (DAEYD), 85–86 (SL), and Glu116. Lys118 acts as the N6-AMP-lysine intermediate in catalysis. NAD(+) is bound by residues Arg139, Glu176, Lys292, and Lys316. Zn(2+) contacts are provided by Cys410, Cys413, Cys428, and Cys434. Residues 591 to 671 (QKGGRFQGMT…QFLAMFSEKE (81 aa)) enclose the BRCT domain.

Belongs to the NAD-dependent DNA ligase family. LigA subfamily. It depends on Mg(2+) as a cofactor. Mn(2+) is required as a cofactor.

The enzyme catalyses NAD(+) + (deoxyribonucleotide)n-3'-hydroxyl + 5'-phospho-(deoxyribonucleotide)m = (deoxyribonucleotide)n+m + AMP + beta-nicotinamide D-nucleotide.. Functionally, DNA ligase that catalyzes the formation of phosphodiester linkages between 5'-phosphoryl and 3'-hydroxyl groups in double-stranded DNA using NAD as a coenzyme and as the energy source for the reaction. It is essential for DNA replication and repair of damaged DNA. The polypeptide is DNA ligase (Acidithiobacillus ferrooxidans (strain ATCC 23270 / DSM 14882 / CIP 104768 / NCIMB 8455) (Ferrobacillus ferrooxidans (strain ATCC 23270))).